A 197-amino-acid polypeptide reads, in one-letter code: 7-methyl-GTP pyrophosphatase (197 aa).

Catalysis depends on aspartate 73, which acts as the Proton acceptor.

The protein belongs to the Maf family. YceF subfamily. A divalent metal cation is required as a cofactor.

The protein localises to the cytoplasm. It carries out the reaction N(7)-methyl-GTP + H2O = N(7)-methyl-GMP + diphosphate + H(+). Nucleoside triphosphate pyrophosphatase that hydrolyzes 7-methyl-GTP (m(7)GTP). May have a dual role in cell division arrest and in preventing the incorporation of modified nucleotides into cellular nucleic acids. The chain is 7-methyl-GTP pyrophosphatase from Alcanivorax borkumensis (strain ATCC 700651 / DSM 11573 / NCIMB 13689 / SK2).